The following is a 146-amino-acid chain: Large ribosomal subunit protein bL21 (146 aa).

The interval 103–146 (DGKSPTIGPRPKKEKAVEPVEGASDDKPRRAAKKTAAKTAEDAD) is disordered. The span at 116–131 (EKAVEPVEGASDDKPR) shows a compositional bias: basic and acidic residues.

The protein belongs to the bacterial ribosomal protein bL21 family. Part of the 50S ribosomal subunit. Contacts protein L20.

In terms of biological role, this protein binds to 23S rRNA in the presence of protein L20. This chain is Large ribosomal subunit protein bL21, found in Nitrobacter winogradskyi (strain ATCC 25391 / DSM 10237 / CIP 104748 / NCIMB 11846 / Nb-255).